The primary structure comprises 270 residues: Putative phosphoenolpyruvate synthase regulatory protein (270 aa).

150–157 (GVSRCGKT) is an ADP binding site.

This sequence belongs to the pyruvate, phosphate/water dikinase regulatory protein family. PSRP subfamily.

The enzyme catalyses [pyruvate, water dikinase] + ADP = [pyruvate, water dikinase]-phosphate + AMP + H(+). The catalysed reaction is [pyruvate, water dikinase]-phosphate + phosphate + H(+) = [pyruvate, water dikinase] + diphosphate. Functionally, bifunctional serine/threonine kinase and phosphorylase involved in the regulation of the phosphoenolpyruvate synthase (PEPS) by catalyzing its phosphorylation/dephosphorylation. This Shewanella piezotolerans (strain WP3 / JCM 13877) protein is Putative phosphoenolpyruvate synthase regulatory protein.